The primary structure comprises 460 residues: Citrate synthase, peroxisomal (460 aa).

The residue at position 21 (serine 21) is a Phosphoserine. Residues lysine 218 and lysine 239 each participate in a glycyl lysine isopeptide (Lys-Gly) (interchain with G-Cter in ubiquitin) cross-link. Active-site residues include histidine 293 and histidine 339. Glycyl lysine isopeptide (Lys-Gly) (interchain with G-Cter in ubiquitin) cross-links involve residues lysine 354 and lysine 385. Aspartate 394 is a catalytic residue. The C-terminal peroxisome targeting signal (PTS1) motif lies at 458-460; the sequence is SKL.

The protein belongs to the citrate synthase family. As to quaternary structure, interacts with F-box protein UCC1. In terms of processing, ubiquitinated by the E3 ubiquitin-protein ligase complex SCF(UCC1), which leads to its degradation by the proteasome. Ubiquitination is prevented by oxaloacetate, suggesting the existence of an oxaloacetate-dependent positive feedback loop that stabilizes CIT2.

Its subcellular location is the cytoplasm. It localises to the peroxisome. It carries out the reaction oxaloacetate + acetyl-CoA + H2O = citrate + CoA + H(+). It participates in carbohydrate metabolism; tricarboxylic acid cycle; isocitrate from oxaloacetate: step 1/2. In terms of biological role, peroxisomal citrate synthase involved in the citrate homeostasis. Catalyzes the condensation of acetyl coenzyme A and oxaloacetate to form citrate. Citrate synthase is the rate-limiting enzyme of the tricarboxylic acid (TCA) cycle. This chain is Citrate synthase, peroxisomal, found in Saccharomyces cerevisiae (strain ATCC 204508 / S288c) (Baker's yeast).